The chain runs to 472 residues: Gamma-glutamylputrescine synthetase PuuA (472 aa).

In terms of domain architecture, GS beta-grasp spans 35–129; it reads PNTQYVDVLL…MLLTMVDEDG (95 aa). Positions 136 to 472 constitute a GS catalytic domain; that stretch reads PRNVLNRLWQ…TEIEWMLKNA (337 aa).

Belongs to the glutamine synthetase family. In terms of assembly, dodecamer. Mg(2+) is required as a cofactor. Requires Mn(2+) as cofactor.

The enzyme catalyses putrescine + L-glutamate + ATP = gamma-L-glutamylputrescine + ADP + phosphate + H(+). It functions in the pathway amine and polyamine degradation; putrescine degradation; 4-aminobutanoate from putrescine: step 1/4. Its function is as follows. Involved in the breakdown of putrescine. Catalyzes the ATP-dependent gamma-glutamylation of putrescine, producing gamma-L-glutamylputrescine. Absolutely essential to utilize putrescine as both nitrogen and carbon sources and to decrease the toxicity of putrescine, which can lead to inhibition of cell growth and protein synthesis. In vitro is also able to use several diamines, and spermidine and spermine, instead of putrescine, but with a much lower activity, and cannot catalyze the gamma-glutamylation of ornithine or GABA. The protein is Gamma-glutamylputrescine synthetase PuuA of Escherichia coli (strain K12).